We begin with the raw amino-acid sequence, 855 residues long: MICAL-like protein 1 (855 aa).

The region spanning 2-108 (AGPRGALLAW…YVSQYYNHFT (107 aa)) is the Calponin-homology (CH) domain. Disordered stretches follow at residues 110–165 (SGQA…SSAC), 226–253 (GRSGTRPLSLQKQQPAAAAEAKDGEDSD), and 269–659 (QASS…HGFP). Low complexity predominate over residues 124–135 (PAAPSPTSTSPA). One can recognise an LIM zinc-binding domain in the interval 163 to 226 (SACAACGQRV…ERCTRLGLGG (64 aa)). A compositionally biased stretch (polar residues) spans 269 to 278 (QASSEVQPHT). 2 positions are modified to phosphoserine: Ser-293 and Ser-307. A compositionally biased stretch (polar residues) spans 308–325 (ESSALTPPTPRPRSSLQQ). Phosphothreonine occurs at positions 313 and 316. Residues 356–367 (LSERMTAPRKDP) are compositionally biased toward basic and acidic residues. The NPF1 motif lies at 423-425 (NPF). A compositionally biased stretch (acidic residues) spans 425–434 (FEEEEEEEEA). Over residues 439 to 449 (VPSPAPAPPET) the composition is skewed to pro residues. A phosphothreonine mark is found at Thr-461 and Thr-463. 4 positions are modified to phosphoserine: Ser-464, Ser-465, Ser-478, and Ser-480. Low complexity predominate over residues 499-514 (PSPALSVESLSSESSS). Residues 542–554 (PGTSANSVTPSAH) are compositionally biased toward polar residues. Residues 555–570 (SSLSSSGELGQPSGEQ) show a composition bias toward low complexity. Phosphoserine is present on Ser-613. The NPF2 signature appears at 625 to 627 (NPF). The mediates the interaction with RAB13 and intramolecular interaction with the calponin-homology (CH) domain stretch occupies residues 644–855 (KGAKPVRPPA…AKSKAPTGKS (212 aa)). The bMERB domain maps to 663 to 810 (RKVQADQYIP…EEEEDKMLET (148 aa)). Residues 679–703 (EMDSIERQLDALEHSGVLLEEKLRG) are a coiled coil. Phosphoserine is present on residues Ser-682 and Ser-732. Residues 692-855 (HSGVLLEEKL…AKSKAPTGKS (164 aa)) are necessary and sufficient to associate with tubular recycling endosome membranes, mediate phosphatidic acid-binding and membrane tubulation. The stretch at 794 to 822 (LDEDRQREEEEDKMLETMIKKKDFQREAE) forms a coiled coil. Positions 815-826 (KDFQREAESDSK) are enriched in basic and acidic residues. Residues 815–855 (KDFQREAESDSKKKGKFKTMKVLKLLGNKRDAKSKAPTGKS) form a disordered region.

In terms of assembly, homooligomer. Interacts (via NPF1 motif) with EHD1 (via EH domain); the interaction is direct and probably recruits EHD1 to membranes. Interacts with EHD3 (via EH domain). Interacts with RAB35 (GTP-bound form); the interaction is direct and probably recruits MICALL1 to membranes. Interacts with ACAP2; the interaction is indirect through RAB35. Interacts with RAB8A (GTP-bound form); regulates RAB8A association with recycling endosomes. Interacts with RAB13 (GTP-bound form). Interacts with ARF6 (GTP-bound form). Interacts with PACSIN2 (via the SH3 domain). Interacts with DPYSL2.

The protein localises to the recycling endosome membrane. The protein resides in the late endosome membrane. It localises to the cell projection. Its subcellular location is the cilium membrane. It is found in the cytoplasm. The protein localises to the cytoskeleton. The protein resides in the microtubule organizing center. It localises to the centrosome. Its subcellular location is the centriole. Functionally, lipid-binding protein with higher affinity for phosphatidic acid, a lipid enriched in recycling endosome membranes. On endosome membranes, acts as a downstream effector of Rab proteins recruiting cytosolic proteins to regulate membrane tubulation. Involved in a late step of receptor-mediated endocytosis regulating for instance endocytosed-EGF receptor trafficking. Alternatively, regulates slow endocytic recycling of endocytosed proteins back to the plasma membrane. Also involved in cargo protein delivery to the plasma membrane. Plays a role in ciliogenesis coordination, recruits EHD1 to primary cilium where it is anchored to the centriole through interaction with tubulins. May indirectly play a role in neurite outgrowth. The chain is MICAL-like protein 1 (Micall1) from Rattus norvegicus (Rat).